Reading from the N-terminus, the 574-residue chain is Glycine--tRNA ligase (574 aa).

Substrate contacts are provided by Arg96 and Glu162. ATP is bound by residues 194–196 (RNE), 204–209 (IRLREF), 327–328 (EC), and 450–453 (GIDR). 209 to 213 (FTQAE) is a substrate binding site. 446–450 (EPSYG) serves as a coordination point for substrate.

Belongs to the class-II aminoacyl-tRNA synthetase family.

It is found in the cytoplasm. It catalyses the reaction tRNA(Gly) + glycine + ATP = glycyl-tRNA(Gly) + AMP + diphosphate. Catalyzes the attachment of glycine to tRNA(Gly). This chain is Glycine--tRNA ligase, found in Methanococcus vannielii (strain ATCC 35089 / DSM 1224 / JCM 13029 / OCM 148 / SB).